Reading from the N-terminus, the 411-residue chain is Gamma-glutamyl phosphate reductase (411 aa).

This sequence belongs to the gamma-glutamyl phosphate reductase family.

It is found in the cytoplasm. It catalyses the reaction L-glutamate 5-semialdehyde + phosphate + NADP(+) = L-glutamyl 5-phosphate + NADPH + H(+). It participates in amino-acid biosynthesis; L-proline biosynthesis; L-glutamate 5-semialdehyde from L-glutamate: step 2/2. Catalyzes the NADPH-dependent reduction of L-glutamate 5-phosphate into L-glutamate 5-semialdehyde and phosphate. The product spontaneously undergoes cyclization to form 1-pyrroline-5-carboxylate. The polypeptide is Gamma-glutamyl phosphate reductase (Nautilia profundicola (strain ATCC BAA-1463 / DSM 18972 / AmH)).